We begin with the raw amino-acid sequence, 133 residues long: Helix-loop-helix protein 1 (133 aa).

Positions 1–78 (MMLNSDTMEL…RRRATAKYRT (78 aa)) are disordered. The segment covering 25–39 (DCGGGPGPDGAGSGD) has biased composition (gly residues). Residues 52–65 (ESGRKDLQHLSREE) are compositionally biased toward basic and acidic residues. The span at 66–78 (RRRRRRATAKYRT) shows a compositional bias: basic residues. Residues 75–127 (KYRTAHATRERIRVEAFNLAFAELRKLLPTLPPDKKLSKIEILRLAICYISYL) enclose the bHLH domain.

Efficient DNA binding requires dimerization with another bHLH protein.

It is found in the nucleus. Functionally, may serve as DNA-binding protein and may be involved in the control of cell-type determination, possibly within the developing nervous system. The protein is Helix-loop-helix protein 1 (Nhlh1) of Mus musculus (Mouse).